A 202-amino-acid chain; its full sequence is Nucleoside triphosphate pyrophosphatase (202 aa).

Aspartate 79 functions as the Proton acceptor in the catalytic mechanism.

Belongs to the Maf family. A divalent metal cation serves as cofactor.

It localises to the cytoplasm. It catalyses the reaction a ribonucleoside 5'-triphosphate + H2O = a ribonucleoside 5'-phosphate + diphosphate + H(+). It carries out the reaction a 2'-deoxyribonucleoside 5'-triphosphate + H2O = a 2'-deoxyribonucleoside 5'-phosphate + diphosphate + H(+). Its function is as follows. Nucleoside triphosphate pyrophosphatase. May have a dual role in cell division arrest and in preventing the incorporation of modified nucleotides into cellular nucleic acids. This Rhodospirillum rubrum (strain ATCC 11170 / ATH 1.1.1 / DSM 467 / LMG 4362 / NCIMB 8255 / S1) protein is Nucleoside triphosphate pyrophosphatase.